Reading from the N-terminus, the 221-residue chain is Retinitis pigmentosa 9 protein (221 aa).

3 stretches are compositionally biased toward basic and acidic residues: residues 1–10 (MSSRPGREDV), 17–29 (RPRE…LQRR), and 60–69 (IKEDETKPED). The tract at residues 1 to 76 (MSSRPGREDV…PEDCIPDVPG (76 aa)) is disordered. Residues 1–155 (MSSRPGREDV…RDNKRHEKDV (155 aa)) form a PIM1-binding region. The CCHC-type zinc finger occupies 104–122 (QCWRCKRYGHRTGDKECPF). A Glycyl lysine isopeptide (Lys-Gly) (interchain with G-Cter in SUMO2) cross-link involves residue Lys129. The segment covering 147–156 (DNKRHEKDVR) has biased composition (basic and acidic residues). A disordered region spans residues 147–221 (DNKRHEKDVR…SKSNEGSDSE (75 aa)). Residues 184-212 (KHKKKKKKEKHKKRKKEKKKKKKRKHKSS) are compositionally biased toward basic residues. Ser212 and Ser214 each carry phosphoserine; by PIM1.

As to quaternary structure, binds to PIM1. Binds to ZNHIT4. In terms of tissue distribution, appears to be expressed in a wide range of tissues.

It localises to the nucleus. In terms of biological role, is thought to be a target protein for the PIM1 kinase. May play some roles in B-cell proliferation in association with PIM1. This Homo sapiens (Human) protein is Retinitis pigmentosa 9 protein (RP9).